We begin with the raw amino-acid sequence, 210 residues long: Large ribosomal subunit protein uL4 (210 aa).

This sequence belongs to the universal ribosomal protein uL4 family. As to quaternary structure, part of the 50S ribosomal subunit.

Its function is as follows. One of the primary rRNA binding proteins, this protein initially binds near the 5'-end of the 23S rRNA. It is important during the early stages of 50S assembly. It makes multiple contacts with different domains of the 23S rRNA in the assembled 50S subunit and ribosome. Functionally, forms part of the polypeptide exit tunnel. The polypeptide is Large ribosomal subunit protein uL4 (Orientia tsutsugamushi (strain Boryong) (Rickettsia tsutsugamushi)).